A 150-amino-acid polypeptide reads, in one-letter code: Mediator of RNA polymerase II transcription subunit 22a (150 aa).

A coiled-coil region spans residues 99–127 (SLNDHVEQRIAEFDQEAEKTNRLLARIAD).

The protein belongs to the Mediator complex subunit 22 family. In terms of assembly, component of the Mediator complex.

Its subcellular location is the nucleus. Functionally, component of the Mediator complex, a coactivator involved in the regulated transcription of nearly all RNA polymerase II-dependent genes. Mediator functions as a bridge to convey information from gene-specific regulatory proteins to the basal RNA polymerase II transcription machinery. The Mediator complex, having a compact conformation in its free form, is recruited to promoters by direct interactions with regulatory proteins and serves for the assembly of a functional preinitiation complex with RNA polymerase II and the general transcription factors. In Arabidopsis thaliana (Mouse-ear cress), this protein is Mediator of RNA polymerase II transcription subunit 22a (MED22A).